The sequence spans 315 residues: Lipoyl synthase (315 aa).

[4Fe-4S] cluster-binding residues include Cys62, Cys67, Cys73, Cys88, Cys92, Cys95, and Ser302. One can recognise a Radical SAM core domain in the interval 73 to 291; that stretch reads CFGHGTATFM…GELAKKLGFS (219 aa).

This sequence belongs to the radical SAM superfamily. Lipoyl synthase family. It depends on [4Fe-4S] cluster as a cofactor.

The protein resides in the cytoplasm. It catalyses the reaction [[Fe-S] cluster scaffold protein carrying a second [4Fe-4S](2+) cluster] + N(6)-octanoyl-L-lysyl-[protein] + 2 oxidized [2Fe-2S]-[ferredoxin] + 2 S-adenosyl-L-methionine + 4 H(+) = [[Fe-S] cluster scaffold protein] + N(6)-[(R)-dihydrolipoyl]-L-lysyl-[protein] + 4 Fe(3+) + 2 hydrogen sulfide + 2 5'-deoxyadenosine + 2 L-methionine + 2 reduced [2Fe-2S]-[ferredoxin]. The protein operates within protein modification; protein lipoylation via endogenous pathway; protein N(6)-(lipoyl)lysine from octanoyl-[acyl-carrier-protein]: step 2/2. In terms of biological role, catalyzes the radical-mediated insertion of two sulfur atoms into the C-6 and C-8 positions of the octanoyl moiety bound to the lipoyl domains of lipoate-dependent enzymes, thereby converting the octanoylated domains into lipoylated derivatives. The protein is Lipoyl synthase of Coxiella burnetii (strain CbuG_Q212) (Coxiella burnetii (strain Q212)).